Reading from the N-terminus, the 446-residue chain is MDMPDYTETLDSSYTMLEFDSIRVLPSNTEIITVETASPGLLNNGINSFCAICGDRATGKHYGASSCDGCKGFFRRSVRKNHVYACRFSRQCIVDKDKRNQCRYCRLRKCFRAGMKKEAVQNERDRISMRRSSYEDNGSLSINVLTQAEAMVHQYSPVSPVHSSDISMKKVASISDVCESMKQQLLLLVEWAKYIPAFCELPLDDQVALLRAHAGAHLLLGVAKRSLPYKDFLLLGNDFIMPMHCPELEIARVPCRILDELVKPLREIQIDDNEYVCLKAIIFFDPDCKGLSDQTKVKNMRFQVQVNLEDYINDRQFDSRGRFSDILLLLPPLQSITWQMIEQVQFAKLFGVARIDSLLQELLLGGTTMDGGQYINSGHSSLNLDLLPGPTVHSHNLHSVIHTVSSLSPETSPPTNSTSEDYKMNTATVSSIPLMQRTVIAKKEIL.

The segment at residues 47–122 (NSFCAICGDR…AGMKKEAVQN (76 aa)) is a DNA-binding region (nuclear receptor). 2 NR C4-type zinc fingers span residues 50 to 70 (CAICGDRATGKHYGASSCDGC) and 86 to 110 (CRFSRQCIVDKDKRNQCRYCRLRKC). The NR LBD domain maps to 137–366 (NGSLSINVLT…SLLQELLLGG (230 aa)).

Belongs to the nuclear hormone receptor family. NR2 subfamily. In terms of assembly, homodimerization is required for HNF4-alpha to bind to its recognition site. In terms of tissue distribution, expressed in liver, kidney, stomach, intestine, lung, ovary, and testis. Not expressed in fat, muscle and brain.

The protein resides in the nucleus. In terms of biological role, transcription factor; binds and activates the promoter for the HNF1-alpha gene. Seems to have a lower DNA binding activity than HNF4-alpha and is a weaker transactivator than the alpha isoform. In Xenopus laevis (African clawed frog), this protein is Hepatocyte nuclear factor 4-beta (hnf4b).